The chain runs to 345 residues: Annexin A9 (345 aa).

4 Annexin repeats span residues F41 to Q112, P113 to K184, N197 to S266, and N270 to R341.

It belongs to the annexin family. As to quaternary structure, homodimer. As to expression, expressed in the stratified squamous skin epithelium, but not in epithelia of other types (at protein level).

In terms of biological role, low affinity receptor for acetylcholine known to be targeted by disease-causing pemphigus vulgaris antibodies in keratinocytes. The protein is Annexin A9 (ANXA9) of Homo sapiens (Human).